We begin with the raw amino-acid sequence, 363 residues long: Peptide chain release factor 1 (363 aa).

Glutamine 237 carries the post-translational modification N5-methylglutamine. Positions 286–295 (EKRRSAEATT) are enriched in basic and acidic residues. Positions 286–305 (EKRRSAEATTRRNLVGSGDR) are disordered.

Belongs to the prokaryotic/mitochondrial release factor family. Post-translationally, methylated by PrmC. Methylation increases the termination efficiency of RF1.

Its subcellular location is the cytoplasm. Functionally, peptide chain release factor 1 directs the termination of translation in response to the peptide chain termination codons UAG and UAA. The polypeptide is Peptide chain release factor 1 (Shewanella amazonensis (strain ATCC BAA-1098 / SB2B)).